The chain runs to 272 residues: MPELPEVETTLRGIEPKLVGRSLARVDIRQPKLRWLITPELSSEMVGEEITHLSRRGKYIGIHTSKGTLIVHLGMSGSLYFVPAETPPLFHDHVDFCFADDDVWLRYTDPRRFGAILWTTEDWHEHELIKHLGPEPLSDMFNADMLYVRAKGRKVPIKTFIMDSKVVVGVGNIYANEALFKAGIRPDRLAGNISKARLARLVECIKVVLAAAIKQGGTTLKDFVGGDGKPGYFKQELAVYGRANKACVICSKPLKEIRQAQRSTVFCINCQS.

The active-site Schiff-base intermediate with DNA is proline 2. Glutamate 3 functions as the Proton donor in the catalytic mechanism. Residue lysine 58 is the Proton donor; for beta-elimination activity of the active site. Residues histidine 91, arginine 111, and arginine 153 each contribute to the DNA site. The segment at alanine 238–serine 272 adopts an FPG-type zinc-finger fold. Catalysis depends on arginine 262, which acts as the Proton donor; for delta-elimination activity.

It belongs to the FPG family. As to quaternary structure, monomer. It depends on Zn(2+) as a cofactor.

The catalysed reaction is Hydrolysis of DNA containing ring-opened 7-methylguanine residues, releasing 2,6-diamino-4-hydroxy-5-(N-methyl)formamidopyrimidine.. It catalyses the reaction 2'-deoxyribonucleotide-(2'-deoxyribose 5'-phosphate)-2'-deoxyribonucleotide-DNA = a 3'-end 2'-deoxyribonucleotide-(2,3-dehydro-2,3-deoxyribose 5'-phosphate)-DNA + a 5'-end 5'-phospho-2'-deoxyribonucleoside-DNA + H(+). Functionally, involved in base excision repair of DNA damaged by oxidation or by mutagenic agents. Acts as a DNA glycosylase that recognizes and removes damaged bases. Has a preference for oxidized purines, such as 7,8-dihydro-8-oxoguanine (8-oxoG). Has AP (apurinic/apyrimidinic) lyase activity and introduces nicks in the DNA strand. Cleaves the DNA backbone by beta-delta elimination to generate a single-strand break at the site of the removed base with both 3'- and 5'-phosphates. The protein is Formamidopyrimidine-DNA glycosylase of Marinomonas sp. (strain MWYL1).